The primary structure comprises 584 residues: Endogenous retrovirus group FC1 Env polyprotein (584 aa).

Residues 1 to 22 form the signal peptide; that stretch reads MARPSPLCLLLLLTLLPPIVPS. Residues 23 to 514 are Extracellular-facing; that stretch reads NSLLTEPPFR…NYGGGWWQSP (492 aa). N-linked (GlcNAc...) asparagine glycosylation is found at asparagine 69 and asparagine 247. Residues 251 to 254 carry the CXXC motif; sequence CFLC. Asparagine 272, asparagine 276, asparagine 308, asparagine 313, asparagine 322, asparagine 334, asparagine 342, and asparagine 346 each carry an N-linked (GlcNAc...) asparagine glycan. Positions 388–413 are fusion peptide; that stretch reads PLVIGVSLTSSLVASGLGTGAIVHFI. Residues 449–465 carry the CKS-17 motif; sequence MQNRRALDLLTADKGGT. Cysteine 466 and cysteine 473 are oxidised to a cystine. Residues 466–474 carry the CX6CC motif; the sequence is CMFLGEECC. The N-linked (GlcNAc...) asparagine glycan is linked to asparagine 478. Residues 515 to 540 form a helical membrane-spanning segment; it reads LTTWIIPFISPILIICLLLLIAPCVL. The Cytoplasmic portion of the chain corresponds to 541–584; sequence KFIKNRISEVSRVTVNQMLLHPYSRLPTSEDHYDVALTQQEAAR.

The protein belongs to the gamma type-C retroviral envelope protein family. HERV class-I F(c)1 env subfamily. The surface (SU) and transmembrane (TM) proteins form a heterodimer. SU and TM are attached by noncovalent interactions or by a labile interchain disulfide bond. Post-translationally, specific enzymatic cleavages in vivo yield the mature SU and TM proteins. In terms of processing, the CXXC motif is highly conserved across a broad range of retroviral envelope proteins. It is thought to participate in the formation of a labile disulfide bond possibly with the CX6CC motif present in the transmembrane protein.

The protein localises to the virion. It is found in the cell membrane. Functionally, retroviral envelope proteins mediate receptor recognition and membrane fusion during early infection. Endogenous envelope proteins may have kept, lost or modified their original function during evolution. This endogenous envelope protein has lost its original fusogenic properties. In terms of biological role, SU mediates receptor recognition. TM anchors the envelope heterodimer to the viral membrane through one transmembrane domain. The other hydrophobic domain, called fusion peptide, mediates fusion of the viral membrane with the target cell membrane. This is Endogenous retrovirus group FC1 Env polyprotein (ERVFC1) from Pan troglodytes (Chimpanzee).